The primary structure comprises 360 residues: U7 snRNA-associated Sm-like protein LSm11 (360 aa).

The tract at residues 1 to 29 (MEERERGARSAGAGSPARPPSPRLDVSSD) is disordered. Phosphoserine occurs at positions 15 and 21. Arg41 is subject to Omega-N-methylarginine. The interval 68-143 (RGGGRGRGRA…PGRSRKAPRN (76 aa)) is disordered. Low complexity predominate over residues 78–94 (RGAAAGSGVPAAPGPSG). Lys120 is covalently cross-linked (Glycyl lysine isopeptide (Lys-Gly) (interchain with G-Cter in SUMO2)). At Ser154 the chain carries Phosphoserine. Residues 154-229 (SPLGELHRCI…LTLTRLFDRL (76 aa)) enclose the Sm domain. Positions 171-204 (VHIRTFKGLRGVCTGFLVAFDKFWNMALTDVDET) are SM 1. The interval 268-333 (ADTGRGSHKR…SRKKKRKPKV (66 aa)) is disordered. Phosphoserine is present on Ser280. A compositionally biased stretch (polar residues) spans 299–322 (GRTTRTDGSSVGGTFSRATTLSRG). Positions 343 to 356 (INQIFIRGENVLLV) are SM 2.

Belongs to the snRNP Sm proteins family. In terms of assembly, component of the heptameric ring U7 snRNP complex, or U7 Sm protein core complex, at least composed of LSM10, LSM11, SNRPB, SNRPD3, SNRPE, SNRPF, SNRPG and U7 snRNA. Formation of the U7 snRNP is an ATP-dependent process mediated by a specialized SMN complex containing at least the Sm protein core complex and additionally, the U7-specific LSM10 and LSM11 proteins. Identified in a histone pre-mRNA complex, at least composed of ERI1, LSM11, SLBP, SNRPB, SYNCRIP and YBX1. Interacts (via the Sm domains) with CLNS1A. Interacts with SMN and ZNF473. Interacts with PRMT5 and WDR77.

Its subcellular location is the nucleus. Component of the U7 snRNP complex that is involved in the histone 3'-end pre-mRNA processing. Increases U7 snRNA levels but not histone 3'-end pre-mRNA processing activity, when overexpressed. Required for cell cycle progression from G1 to S phases. Binds specifically to the Sm-binding site of U7 snRNA. This Homo sapiens (Human) protein is U7 snRNA-associated Sm-like protein LSm11.